Consider the following 238-residue polypeptide: MSEDLAKQLASYKAQLQQVEAALSGNGENEDLLKLKKDLQEVIELTKDLLSTQPSETLASSDSFASTQPTHSWKVGDKCMAIWSEDGQCYEAEIEEIDEENGTAAITFAGYGNAEVTPLLNLKPVEEGRKAKEDSGNKPMSKKEMIAQQREYKKKKALKKAQRIKELEQEREDQKVKWQQFNNRAYSKNKKGQVKRSIFASPESVTGKVGVGTCGIADKPMTQYQDTSKYNVRHLMPQ.

Residues 72–132 enclose the Tudor domain; sequence SWKVGDKCMA…KPVEEGRKAK (61 aa). Residues 142 to 160 carry the Nuclear localization signal motif; sequence KKEMIAQQREYKKKKALKK. S201 carries the post-translational modification Phosphoserine. An N6-acetyllysine modification is found at K219.

The protein belongs to the SMN family. In terms of assembly, associates with spliceosomes. Associates with U4/U5/U6 tri-snRNP and with U2 snRNP.

It is found in the nucleus speckle. The protein resides in the nucleus. It localises to the cajal body. Functionally, involved in spliceosome assembly. The polypeptide is Survival of motor neuron-related-splicing factor 30 (SMNDC1) (Pongo abelii (Sumatran orangutan)).